The sequence spans 427 residues: 3-phosphoshikimate 1-carboxyvinyltransferase (427 aa).

3-phosphoshikimate-binding residues include Lys-22, Ser-23, and Arg-27. Lys-22 lines the phosphoenolpyruvate pocket. Positions 97 and 125 each coordinate phosphoenolpyruvate. Residues Ser-171, Ser-172, Gln-173, Ser-199, Asp-315, Asn-338, and Lys-342 each coordinate 3-phosphoshikimate. Phosphoenolpyruvate is bound at residue Gln-173. The active-site Proton acceptor is the Asp-315. Residues Arg-346, Arg-388, and Lys-413 each coordinate phosphoenolpyruvate.

This sequence belongs to the EPSP synthase family. Monomer.

It is found in the cytoplasm. It carries out the reaction 3-phosphoshikimate + phosphoenolpyruvate = 5-O-(1-carboxyvinyl)-3-phosphoshikimate + phosphate. The protein operates within metabolic intermediate biosynthesis; chorismate biosynthesis; chorismate from D-erythrose 4-phosphate and phosphoenolpyruvate: step 6/7. Functionally, catalyzes the transfer of the enolpyruvyl moiety of phosphoenolpyruvate (PEP) to the 5-hydroxyl of shikimate-3-phosphate (S3P) to produce enolpyruvyl shikimate-3-phosphate and inorganic phosphate. The chain is 3-phosphoshikimate 1-carboxyvinyltransferase from Aliivibrio salmonicida (strain LFI1238) (Vibrio salmonicida (strain LFI1238)).